The sequence spans 198 residues: Dephospho-CoA kinase (198 aa).

One can recognise a DPCK domain in the interval 4-198 (IIGITGGIAS…DSQLRRLQNE (195 aa)). 12–17 (ASGKST) contributes to the ATP binding site.

The protein belongs to the CoaE family.

Its subcellular location is the cytoplasm. It catalyses the reaction 3'-dephospho-CoA + ATP = ADP + CoA + H(+). It participates in cofactor biosynthesis; coenzyme A biosynthesis; CoA from (R)-pantothenate: step 5/5. Its function is as follows. Catalyzes the phosphorylation of the 3'-hydroxyl group of dephosphocoenzyme A to form coenzyme A. In Streptococcus mutans serotype c (strain ATCC 700610 / UA159), this protein is Dephospho-CoA kinase.